The chain runs to 447 residues: Trigger factor (447 aa).

The PPIase FKBP-type domain maps to 164–249 (GNQVTFDFEG…VKLVEKSKLP (86 aa)).

This sequence belongs to the FKBP-type PPIase family. Tig subfamily.

Its subcellular location is the cytoplasm. The catalysed reaction is [protein]-peptidylproline (omega=180) = [protein]-peptidylproline (omega=0). Involved in protein export. Acts as a chaperone by maintaining the newly synthesized protein in an open conformation. Functions as a peptidyl-prolyl cis-trans isomerase. The chain is Trigger factor from Psychrobacter cryohalolentis (strain ATCC BAA-1226 / DSM 17306 / VKM B-2378 / K5).